The following is a 417-amino-acid chain: Serine hydroxymethyltransferase (417 aa).

(6S)-5,6,7,8-tetrahydrofolate-binding positions include L121 and 125–127 (GHL). Residue K229 is modified to N6-(pyridoxal phosphate)lysine. 354-356 (SPF) is a (6S)-5,6,7,8-tetrahydrofolate binding site.

Belongs to the SHMT family. As to quaternary structure, homodimer. The cofactor is pyridoxal 5'-phosphate.

Its subcellular location is the cytoplasm. The catalysed reaction is (6R)-5,10-methylene-5,6,7,8-tetrahydrofolate + glycine + H2O = (6S)-5,6,7,8-tetrahydrofolate + L-serine. It functions in the pathway one-carbon metabolism; tetrahydrofolate interconversion. Its pathway is amino-acid biosynthesis; glycine biosynthesis; glycine from L-serine: step 1/1. Catalyzes the reversible interconversion of serine and glycine with tetrahydrofolate (THF) serving as the one-carbon carrier. This reaction serves as the major source of one-carbon groups required for the biosynthesis of purines, thymidylate, methionine, and other important biomolecules. Also exhibits THF-independent aldolase activity toward beta-hydroxyamino acids, producing glycine and aldehydes, via a retro-aldol mechanism. This chain is Serine hydroxymethyltransferase, found in Azotobacter vinelandii (strain DJ / ATCC BAA-1303).